A 318-amino-acid chain; its full sequence is Methionyl-tRNA formyltransferase (318 aa).

112 to 115 contacts (6S)-5,6,7,8-tetrahydrofolate; the sequence is SILP.

Belongs to the Fmt family.

It carries out the reaction L-methionyl-tRNA(fMet) + (6R)-10-formyltetrahydrofolate = N-formyl-L-methionyl-tRNA(fMet) + (6S)-5,6,7,8-tetrahydrofolate + H(+). In terms of biological role, attaches a formyl group to the free amino group of methionyl-tRNA(fMet). The formyl group appears to play a dual role in the initiator identity of N-formylmethionyl-tRNA by promoting its recognition by IF2 and preventing the misappropriation of this tRNA by the elongation apparatus. The protein is Methionyl-tRNA formyltransferase of Shewanella baltica (strain OS155 / ATCC BAA-1091).